The sequence spans 490 residues: Protein nucleotidyltransferase YdiU (490 aa).

8 residues coordinate ATP: G94, G96, R97, K117, D129, G130, R180, and R187. D256 functions as the Proton acceptor in the catalytic mechanism. The Mg(2+) site is built by N257 and D266. Residue D266 participates in ATP binding.

This sequence belongs to the SELO family. Mg(2+) serves as cofactor. Mn(2+) is required as a cofactor.

It carries out the reaction L-seryl-[protein] + ATP = 3-O-(5'-adenylyl)-L-seryl-[protein] + diphosphate. It catalyses the reaction L-threonyl-[protein] + ATP = 3-O-(5'-adenylyl)-L-threonyl-[protein] + diphosphate. The enzyme catalyses L-tyrosyl-[protein] + ATP = O-(5'-adenylyl)-L-tyrosyl-[protein] + diphosphate. The catalysed reaction is L-histidyl-[protein] + UTP = N(tele)-(5'-uridylyl)-L-histidyl-[protein] + diphosphate. It carries out the reaction L-seryl-[protein] + UTP = O-(5'-uridylyl)-L-seryl-[protein] + diphosphate. It catalyses the reaction L-tyrosyl-[protein] + UTP = O-(5'-uridylyl)-L-tyrosyl-[protein] + diphosphate. Its function is as follows. Nucleotidyltransferase involved in the post-translational modification of proteins. It can catalyze the addition of adenosine monophosphate (AMP) or uridine monophosphate (UMP) to a protein, resulting in modifications known as AMPylation and UMPylation. The protein is Protein nucleotidyltransferase YdiU of Clostridium perfringens (strain SM101 / Type A).